Here is a 980-residue protein sequence, read N- to C-terminus: MKSLKAKFRKSDTNEWNKNDDRLLQAVENGDAEKVASLLGKKGASATKHDSEGKTAFHLAAAKGHVECLRVMITHGVDVTAQDTTGHSALHLAAKNSHHECIRKLLQSKCPAESVDSSGKTALHYAAAQGCLQAVQILCEHKSPINLKDLDGNIPLLLAVQNGHSEICHFLLDHGADVNSRNKSGRTALMLACEIGSSNAVEALIKKGADLNLVDSLGYNALHYSKLSENAGIQSLLLSKISQDADLKTPTKPKQHDQVSKISSERSGTPKKRKAPPPPISPTQLSDVSSPRSITSTPLSGKESVFFAEPPFKAEISSIRENKDRLSDSTTGADSLLDISSEADQQDLLSLLQAKVASLTLHNKELQDKLQAKSPKEAEADLSFDSYHSTQTDLGPSLGKPGETSPPDSKSSPSVLIHSLGKSTTDNDVRIQQLQEILQDLQKRLESSEAERKQLQVELQSRRAELVCLNNTEISENSSDLSQKLKETQSKYEEAMKEVLSVQKQMKLGLVSPESMDNYSHFHELRVTEEEINVLKQDLQNALEESERNKEKVRELEEKLVEREKGTVIKPPVEEYEEMKSSYCSVIENMNKEKAFLFEKYQEAQEEIMKLKDTLKSQMTQEASDEAEDMKEAMNRMIDELNKQVSELSQLYKEAQAELEDYRKRKSLEDVTAEYIHKAEHEKLMQLTNVSRAKAEDALSEMKSQYSKVLNELTQLKQLVDAQKENSVSITEHLQVITTLRTAAKEMEEKISNLKEHLASKEVEVAKLEKQLLEEKAAMTDAMVPRSSYEKLQSSLESEVSVLASKLKESVKEKEKVHSEVVQIRSEVSQVKREKENIQTLLKSKEQEVNELLQKFQQAQEELAEMKRYAESSSKLEEDKDKKINEMSKEVTKLKEALNSLSQLSYSTSSSKRQSQQLEALQQQVKQLQNQLAECKKQHQEVISVYRMHLLYAVQGQMDEDVQKVLKQILTMCKNQSQKK.

Methionine 1 is subject to N-acetylmethionine. Serine 11 carries the phosphoserine modification. 7 ANK repeats span residues 18 to 51, 52 to 81, 85 to 114, 118 to 147, 151 to 180, 184 to 213, and 217 to 247; these read KNDD…KHDS, EGKT…DVTA, TGHS…PAES, SGKT…PINL, DGNI…DVNS, SGRT…DLNL, and LGYN…DADL. Residues 247 to 259 show a composition bias toward basic and acidic residues; sequence LKTPTKPKQHDQV. Residues 247 to 301 are disordered; that stretch reads LKTPTKPKQHDQVSKISSERSGTPKKRKAPPPPISPTQLSDVSSPRSITSTPLSG. Threonine 249 is modified (phosphothreonine). The Nuclear localization signal signature appears at 270–276; that stretch reads PKKRKAP. A phosphoserine mark is found at serine 281, serine 286, and serine 293. Residues 282-299 show a composition bias toward polar residues; that stretch reads PTQLSDVSSPRSITSTPL. Phosphothreonine occurs at positions 295 and 297. Phosphoserine is present on residues serine 300, serine 304, serine 318, serine 327, serine 329, serine 340, serine 341, serine 350, serine 358, serine 419, serine 512, serine 515, serine 667, and serine 915. Positions 349 to 374 form a coiled coil; sequence LSLLQAKVASLTLHNKELQDKLQAKS. The segment at 387-423 is disordered; sequence YHSTQTDLGPSLGKPGETSPPDSKSSPSVLIHSLGKS. The stretch at 425–947 forms a coiled coil; that stretch reads TDNDVRIQQL…QHQEVISVYR (523 aa).

In terms of assembly, interacts with PALLD. Associates with actin. However, does not bind F-actin directly. Highly expressed in placenta, muscle, kidney and testis. Moderately expressed in heart, brain, lung, liver and intestine. Isoform 2 is widely expressed and expressed in fetal and adult testes, and spermatozoa.

It localises to the cytoplasm. The protein resides in the cytoskeleton. Its subcellular location is the stress fiber. The protein localises to the cell cortex. It is found in the cell junction. It localises to the nucleus. In terms of biological role, plays a role in actin regulation at the ectoplasmic specialization, a type of cell junction specific to testis. Important for establishment of sperm polarity and normal spermatid adhesion. May also promote integrity of Sertoli cell tight junctions at the blood-testis barrier. This Homo sapiens (Human) protein is Ankycorbin (RAI14).